The primary structure comprises 146 residues: Hemoglobin subunit beta (146 aa).

In terms of domain architecture, Globin spans 2-146 (HWTAEEKQLI…VAHALARKYH (145 aa)). His-63 and His-92 together coordinate heme b.

Belongs to the globin family. In terms of assembly, heterotetramer of two alpha chains and two beta chains. As to expression, red blood cells.

Involved in oxygen transport from the lung to the various peripheral tissues. The polypeptide is Hemoglobin subunit beta (HBB) (Branta canadensis (Canada goose)).